The sequence spans 466 residues: Argininosuccinate lyase (466 aa).

It belongs to the lyase 1 family. Argininosuccinate lyase subfamily.

The protein localises to the cytoplasm. The catalysed reaction is 2-(N(omega)-L-arginino)succinate = fumarate + L-arginine. Its pathway is amino-acid biosynthesis; L-arginine biosynthesis; L-arginine from L-ornithine and carbamoyl phosphate: step 3/3. In Syntrophobacter fumaroxidans (strain DSM 10017 / MPOB), this protein is Argininosuccinate lyase.